A 450-amino-acid chain; its full sequence is Gluconate permease (450 aa).

12 helical membrane passes run 6–26 (HDAY…VLIT), 30–50 (VHPF…SGMP), 60–80 (DGFG…TMLG), 116–136 (VGIP…VFIV), 142–162 (VSLI…HGLV), 183–203 (ILYG…LFGA), 233–253 (FGVT…KTFA), 269–289 (MIGH…YTFG), 312–332 (AIVM…ASGV), 338–358 (HLAV…AAVI), 366–386 (TVAT…IPGV), and 430–450 (AMET…SLVL).

It belongs to the GntP permease family.

It is found in the cell inner membrane. Its pathway is carbohydrate acid metabolism; D-gluconate degradation. The protein is Gluconate permease (gnuT) of Pseudomonas aeruginosa (strain ATCC 15692 / DSM 22644 / CIP 104116 / JCM 14847 / LMG 12228 / 1C / PRS 101 / PAO1).